The sequence spans 361 residues: Homocitrate synthase (361 aa).

In terms of domain architecture, Pyruvate carboxyltransferase spans 1–251; it reads MVLDSTLREG…KYRLDLLYRV (251 aa). 2-oxoglutarate is bound at residue R8. E9 contacts Mg(2+). 3 residues coordinate 2-oxoglutarate: H68, R128, and T162. Mg(2+) is bound by residues H188 and H190. The Proton acceptor role is filled by H282.

This sequence belongs to the alpha-IPM synthase/homocitrate synthase family. Homocitrate synthase LYS20/LYS21 subfamily. It depends on Mg(2+) as a cofactor. Requires Mn(2+) as cofactor.

The catalysed reaction is acetyl-CoA + 2-oxoglutarate + H2O = (2R)-homocitrate + CoA + H(+). Its pathway is amino-acid biosynthesis; L-lysine biosynthesis via AAA pathway; L-alpha-aminoadipate from 2-oxoglutarate: step 1/5. Its function is as follows. Catalyzes the aldol-type condensation of 2-oxoglutarate with acetyl-CoA to yield homocitrate. Carries out the first step of the alpha-aminoadipate (AAA) lysine biosynthesis pathway. This is Homocitrate synthase from Pyrococcus abyssi (strain GE5 / Orsay).